A 463-amino-acid polypeptide reads, in one-letter code: Lariat debranching enzyme (463 aa).

A divalent metal cation-binding residues include Cys-8, His-10, Asp-33, and Asn-78. A lariat recognition loop region spans residues 118 to 148; it reads SGIYSAMDYKKGRYEGLPYNYKMLKSIYHTR. Residues His-168, His-220, and His-222 each contribute to the a divalent metal cation site. A disordered region spans residues 250–324; it reads SGFSMKGLNE…QVTKFLALDK (75 aa). The span at 256–267 shows a compositional bias: polar residues; it reads GLNEPSQERLPV. 2 stretches are compositionally biased toward basic and acidic residues: residues 276–289 and 299–323; these read DEEG…EKQD and CRKE…LALD.

It belongs to the lariat debranching enzyme family. The cofactor is Fe(2+). Requires Zn(2+) as cofactor. Mn(2+) is required as a cofactor.

The protein localises to the nucleus. The protein resides in the cytoplasm. Its activity is regulated as follows. Active in presence of diverse metals including Fe(2+), Zn(2+) and Mn(2+). Binds two metal cations in two adjacent alpha and beta metal-binding pockets. Its function is as follows. Cleaves the 2'-5' phosphodiester linkage at the branch point of lariat intron pre-mRNAs after splicing and converts them into linear molecules that are subsequently degraded, thereby facilitating ribonucleotide turnover. The polypeptide is Lariat debranching enzyme (dbr1) (Schizosaccharomyces pombe (strain 972 / ATCC 24843) (Fission yeast)).